The sequence spans 424 residues: G1/S-specific cyclin-E (424 aa).

Residues M1–N25 form a disordered region. Polar residues predominate over residues R7–L17. A Phosphothreonine modification is found at T411.

This sequence belongs to the cyclin family. Cyclin E subfamily. In terms of assembly, interacts with a member of the CDK2/CDK protein kinases to form a serine/threonine kinase holoenzyme complex. The cyclin subunit imparts substrate specificity to the complex.

Its subcellular location is the nucleus. Functionally, essential for the control of the cell cycle at the G1/S (start) transition. The chain is G1/S-specific cyclin-E (CYCE) from Hemicentrotus pulcherrimus (Sea urchin).